Reading from the N-terminus, the 679-residue chain is Cysteine-rich receptor-like protein kinase 29 (679 aa).

Residues 1–23 form the signal peptide; the sequence is MEHVRVIFFFACFLTLAPFHAFA. The Extracellular segment spans residues 24 to 286; that stretch reads QVDSYEFDPD…RTGKGKGGSK (263 aa). 2 consecutive Gnk2-homologous domains span residues 30-134 and 140-249; these read FDPD…NRTI and TNPT…TWRF. Residues asparagine 41, asparagine 45, asparagine 71, asparagine 107, asparagine 131, and asparagine 187 are each glycosylated (N-linked (GlcNAc...) asparagine). The tract at residues 260-281 is disordered; it reads PPAIQPADSPQSAARTERTGKG. The helical transmembrane segment at 287 to 307 threads the bilayer; sequence VIIAIVIPILLVALLAICLCL. Over 308 to 679 the chain is Cytoplasmic; sequence VLKWRKNKSG…DVTVSEFSPR (372 aa). Residues 357–637 enclose the Protein kinase domain; it reads FSSENELGRG…SLMLNSYSFT (281 aa). ATP contacts are provided by residues 363–371 and lysine 385; that span reads LGRGGFGSV. A Phosphotyrosine modification is found at tyrosine 430. The active-site Proton acceptor is the aspartate 482. Phosphoserine is present on serine 486. Position 524 is a phosphothreonine (threonine 524). The residue at position 532 (tyrosine 532) is a Phosphotyrosine. Residues 659–679 are disordered; it reads SSTEGLQMSSNDVTVSEFSPR.

Belongs to the protein kinase superfamily. Ser/Thr protein kinase family. CRK subfamily.

The protein localises to the membrane. The catalysed reaction is L-seryl-[protein] + ATP = O-phospho-L-seryl-[protein] + ADP + H(+). It catalyses the reaction L-threonyl-[protein] + ATP = O-phospho-L-threonyl-[protein] + ADP + H(+). The polypeptide is Cysteine-rich receptor-like protein kinase 29 (CRK29) (Arabidopsis thaliana (Mouse-ear cress)).